A 55-amino-acid chain; its full sequence is Spermatid nuclear transition protein 1 (55 aa).

Basic residues predominate over residues 1 to 42; the sequence is MSTSRKLKSHGMRRGKNRAPHKGVKRGGSKRKYRKGSLKSRK. Residues 1-55 form a disordered region; it reads MSTSRKLKSHGMRRGKNRAPHKGVKRGGSKRKYRKGSLKSRKRCDDANRNYRSHL. Ser-9, Ser-37, and Ser-40 each carry phosphoserine.

This sequence belongs to the nuclear transition protein 1 family. As to expression, testis.

The protein localises to the nucleus. It is found in the chromosome. Functionally, plays a key role in the replacement of histones to protamine in the elongating spermatids of mammals. In condensing spermatids, loaded onto the nucleosomes, where it promotes the recruitment and processing of protamines, which are responsible for histone eviction. The sequence is that of Spermatid nuclear transition protein 1 (TNP1) from Sus scrofa (Pig).